Reading from the N-terminus, the 569-residue chain is Urease subunit beta (569 aa).

Positions 131-569 (GGIDTHIHFI…VSLAQLFSIF (439 aa)) constitute a Urease domain. Positions 136, 138, and 219 each coordinate Ni(2+). Lysine 219 carries the post-translational modification N6-carboxylysine. Position 221 (histidine 221) interacts with substrate. The Ni(2+) site is built by histidine 248 and histidine 274. The Proton donor role is filled by histidine 322. Aspartate 362 is a Ni(2+) binding site.

This sequence belongs to the metallo-dependent hydrolases superfamily. Urease alpha subunit family. Heterohexamer of 3 UreA (alpha) and 3 UreB (beta) subunits. It depends on Ni cation as a cofactor. In terms of processing, carboxylation allows a single lysine to coordinate two nickel ions.

The protein localises to the cytoplasm. It carries out the reaction urea + 2 H2O + H(+) = hydrogencarbonate + 2 NH4(+). Its pathway is nitrogen metabolism; urea degradation; CO(2) and NH(3) from urea (urease route): step 1/1. In Helicobacter pylori (strain HPAG1), this protein is Urease subunit beta.